Consider the following 309-residue polypeptide: MPIRIPDALPAVNFLRNENVFVMTDSRAAVQEIRPLKVLLLNLMPKKIETENQFLRLLSNSPLQIDIQLLRIDRRESKNTPMEHLNNFYCHFEDIQQENFDGLVVTGAPLGQVDFGDVAYWSQIVQVIEWARAHVTSTLFVCWAAQAALNILYGLPKMTRAQKLSGVYEHQTLNPLALLTRGFDEGFLAPHSRYADFPPQAIREHTDLQIFAESAQAGAYLFASVDKRTVFVTGHPEYDAHTLGAEYWRDLHAGLTPALPFNYFPQDNSDGTPLATWRSHGHLLFSNWLNYCVYQITPYDLRQMNPTLE.

Cys142 acts as the Acyl-thioester intermediate in catalysis. Positions 163 and 192 each coordinate substrate. His235 serves as the catalytic Proton acceptor. Glu237 is a catalytic residue. Position 249 (Arg249) interacts with substrate.

Belongs to the MetA family.

It localises to the cytoplasm. The catalysed reaction is L-homoserine + succinyl-CoA = O-succinyl-L-homoserine + CoA. Its pathway is amino-acid biosynthesis; L-methionine biosynthesis via de novo pathway; O-succinyl-L-homoserine from L-homoserine: step 1/1. Transfers a succinyl group from succinyl-CoA to L-homoserine, forming succinyl-L-homoserine. This is Homoserine O-succinyltransferase from Edwardsiella ictaluri (strain 93-146).